Reading from the N-terminus, the 309-residue chain is Formimidoylglutamase (309 aa).

Positions 128, 153, 155, 157, 240, and 242 each coordinate Mn(2+).

Belongs to the arginase family. Requires Mn(2+) as cofactor.

The catalysed reaction is N-formimidoyl-L-glutamate + H2O = formamide + L-glutamate. It functions in the pathway amino-acid degradation; L-histidine degradation into L-glutamate; L-glutamate from N-formimidoyl-L-glutamate (hydrolase route): step 1/1. Its function is as follows. Catalyzes the conversion of N-formimidoyl-L-glutamate to L-glutamate and formamide. The protein is Formimidoylglutamase of Staphylococcus carnosus (strain TM300).